We begin with the raw amino-acid sequence, 515 residues long: Bifunctional purine biosynthesis protein PurH (515 aa).

Positions 1-145 (MTKRALISVS…KNHASVTVVV (145 aa)) constitute an MGS-like domain.

Belongs to the PurH family.

The enzyme catalyses (6R)-10-formyltetrahydrofolate + 5-amino-1-(5-phospho-beta-D-ribosyl)imidazole-4-carboxamide = 5-formamido-1-(5-phospho-D-ribosyl)imidazole-4-carboxamide + (6S)-5,6,7,8-tetrahydrofolate. The catalysed reaction is IMP + H2O = 5-formamido-1-(5-phospho-D-ribosyl)imidazole-4-carboxamide. The protein operates within purine metabolism; IMP biosynthesis via de novo pathway; 5-formamido-1-(5-phospho-D-ribosyl)imidazole-4-carboxamide from 5-amino-1-(5-phospho-D-ribosyl)imidazole-4-carboxamide (10-formyl THF route): step 1/1. It participates in purine metabolism; IMP biosynthesis via de novo pathway; IMP from 5-formamido-1-(5-phospho-D-ribosyl)imidazole-4-carboxamide: step 1/1. This Streptococcus equi subsp. equi (strain 4047) protein is Bifunctional purine biosynthesis protein PurH.